A 333-amino-acid polypeptide reads, in one-letter code: Ferrochelatase (333 aa).

The Fe cation site is built by histidine 202 and glutamate 284.

This sequence belongs to the ferrochelatase family.

It is found in the cytoplasm. It carries out the reaction heme b + 2 H(+) = protoporphyrin IX + Fe(2+). The protein operates within porphyrin-containing compound metabolism; protoheme biosynthesis; protoheme from protoporphyrin-IX: step 1/1. Catalyzes the ferrous insertion into protoporphyrin IX. This is Ferrochelatase from Francisella tularensis subsp. holarctica (strain LVS).